A 381-amino-acid chain; its full sequence is Dual specificity protein phosphatase 6 (381 aa).

Positions glycine 30–glutamate 148 constitute a Rhodanese domain. Residues serine 176–glutamine 203 form a disordered region. Positions asparagine 189–glutamine 203 are enriched in polar residues. In terms of domain architecture, Tyrosine-protein phosphatase spans phenylalanine 206–leucine 349. Cysteine 293 (phosphocysteine intermediate) is an active-site residue.

This sequence belongs to the protein-tyrosine phosphatase family. Non-receptor class dual specificity subfamily. Interacts with MAPK1/ERK2. Post-translationally, ubiquitinated by the SCF(FBXO31) complex, leading to its proteasomal degradation.

Its subcellular location is the cytoplasm. It carries out the reaction O-phospho-L-tyrosyl-[protein] + H2O = L-tyrosyl-[protein] + phosphate. The enzyme catalyses O-phospho-L-seryl-[protein] + H2O = L-seryl-[protein] + phosphate. It catalyses the reaction O-phospho-L-threonyl-[protein] + H2O = L-threonyl-[protein] + phosphate. Functionally, dual specificity protein phosphatase, which mediates dephosphorylation and inactivation of MAP kinases. Has a specificity for the ERK family. Plays an important role in alleviating acute postoperative pain. Necessary for the normal dephosphorylation of the long-lasting phosphorylated forms of spinal MAPK1/3 and MAP kinase p38 induced by peripheral surgery, which drives the resolution of acute postoperative allodynia. Also important for dephosphorylation of MAPK1/3 in local wound tissue, which further contributes to resolution of acute pain. The protein is Dual specificity protein phosphatase 6 (Dusp6) of Mus musculus (Mouse).